A 106-amino-acid polypeptide reads, in one-letter code: Large ribosomal subunit protein P2 (106 aa).

Residues 79 to 106 (GAGAVAEAKKEEPEEEEADDDMGFGLFD) form a disordered region. Positions 91–100 (PEEEEADDDM) are enriched in acidic residues.

Belongs to the eukaryotic ribosomal protein P1/P2 family. In terms of assembly, P1 and P2 exist as dimers at the large ribosomal subunit. In terms of processing, phosphorylated.

In terms of biological role, plays an important role in the elongation step of protein synthesis. The protein is Large ribosomal subunit protein P2 (LIP) of Leishmania infantum.